The sequence spans 658 residues: DNA mismatch repair protein MutL (658 aa).

Disordered stretches follow at residues Arg114–Ala137 and Arg437–Asp456. The span at Pro442–Asp456 shows a compositional bias: polar residues.

Belongs to the DNA mismatch repair MutL/HexB family.

Its function is as follows. This protein is involved in the repair of mismatches in DNA. It is required for dam-dependent methyl-directed DNA mismatch repair. May act as a 'molecular matchmaker', a protein that promotes the formation of a stable complex between two or more DNA-binding proteins in an ATP-dependent manner without itself being part of a final effector complex. The polypeptide is DNA mismatch repair protein MutL (Neisseria meningitidis serogroup B (strain ATCC BAA-335 / MC58)).